Reading from the N-terminus, the 144-residue chain is Catabolic 3-dehydroquinase (144 aa).

Tyr-24 functions as the Proton acceptor in the catalytic mechanism. Substrate contacts are provided by Asn-76, His-82, and Asp-89. Catalysis depends on His-102, which acts as the Proton donor. Substrate-binding positions include 103-104 (IT) and Arg-113.

It belongs to the type-II 3-dehydroquinase family. In terms of assembly, homododecamer. Adopts a ring-like structure, composed of an arrangement of two hexameric rings stacked on top of one another.

It carries out the reaction 3-dehydroquinate = 3-dehydroshikimate + H2O. Its pathway is aromatic compound metabolism; 3,4-dihydroxybenzoate biosynthesis; 3,4-dihydroxybenzoate from 3-dehydroquinate: step 1/2. Its function is as follows. Is involved in the catabolism of quinate. Allows the utilization of quinate as carbon source via the beta-ketoadipate pathway. This is Catabolic 3-dehydroquinase from Debaryomyces hansenii (strain ATCC 36239 / CBS 767 / BCRC 21394 / JCM 1990 / NBRC 0083 / IGC 2968) (Yeast).